The primary structure comprises 243 residues: MATIDLQKKSVKIVLEKKQLTKVTARVGLVLDITGSMRPLYKNGTVQNVVERILAVADQFDDNGLLDVWVYDNEFSRLKPVSEKDFSGYVDREILNNDRLHKFGRNDEPPVMKDVLRKYVTEEPSSYPAFIVFINDGGCKKSIKPIIEASSDKPVFWQFVGIGNGNFDFLNKLDTLEGRVIDNTNFLHIEEIDRISDDELYDALLAEFPFWLKEAKEKGIVREQEPPAEKPKKKGFFSRLFSK.

Residues 26–204 (RVGLVLDITG…ISDDELYDAL (179 aa)) enclose the VWFA domain. Positions 222–243 (REQEPPAEKPKKKGFFSRLFSK) are disordered. Residues 231–243 (PKKKGFFSRLFSK) show a composition bias toward basic residues.

This is an uncharacterized protein from Bacillus subtilis (strain 168).